A 100-amino-acid chain; its full sequence is Large ribosomal subunit protein bL21 (100 aa).

Belongs to the bacterial ribosomal protein bL21 family. As to quaternary structure, part of the 50S ribosomal subunit. Contacts protein L20.

This protein binds to 23S rRNA in the presence of protein L20. This chain is Large ribosomal subunit protein bL21, found in Mycoplasma pneumoniae (strain ATCC 29342 / M129 / Subtype 1) (Mycoplasmoides pneumoniae).